The primary structure comprises 37 residues: Ice-structuring protein 3 (37 aa).

Belongs to the type-I AFP family.

Its function is as follows. Contributes to protect fish blood from freezing at subzero sea water temperatures. Lowers the blood freezing point. Binds to nascent ice crystals and prevents further growth. This Pseudopleuronectes americanus (Winter flounder) protein is Ice-structuring protein 3.